Here is a 295-residue protein sequence, read N- to C-terminus: Small ribosomal subunit protein uS2 (295 aa).

The tract at residues 247–295 (TDKGLTSKNVSKLKQTKKFSKTKNIDEETNTEFEQALNDADENKNSDNA) is disordered.

It belongs to the universal ribosomal protein uS2 family.

The polypeptide is Small ribosomal subunit protein uS2 (Rickettsia conorii (strain ATCC VR-613 / Malish 7)).